Reading from the N-terminus, the 380-residue chain is Cytochrome b (380 aa).

The next 4 membrane-spanning stretches (helical) occupy residues 34–54 (FGSLLGICLATQILTGLLLAA), 78–99 (WLIRNLHANGASFFFICIYLHI), 114–134 (WNTGVILLLTLMATAFVGYVL), and 179–199 (FFTLHFLLPFMIMGLTLIHLT). Heme b contacts are provided by histidine 84 and histidine 98. Residues histidine 183 and histidine 197 each contribute to the heme b site. An a ubiquinone-binding site is contributed by histidine 202. Helical transmembrane passes span 227-247 (LKDTLGFMFMLLPLMTLALFS), 289-309 (LGGVLALAASVLILFLAPLLH), 321-341 (LFQLLFWTLTANLLILTWVGS), and 348-368 (FIIIGQLASLTYFTILLILFP).

It belongs to the cytochrome b family. In terms of assembly, the cytochrome bc1 complex contains 11 subunits: 3 respiratory subunits (MT-CYB, CYC1 and UQCRFS1), 2 core proteins (UQCRC1 and UQCRC2) and 6 low-molecular weight proteins (UQCRH/QCR6, UQCRB/QCR7, UQCRQ/QCR8, UQCR10/QCR9, UQCR11/QCR10 and a cleavage product of UQCRFS1). This cytochrome bc1 complex then forms a dimer. The cofactor is heme b.

The protein localises to the mitochondrion inner membrane. Functionally, component of the ubiquinol-cytochrome c reductase complex (complex III or cytochrome b-c1 complex) that is part of the mitochondrial respiratory chain. The b-c1 complex mediates electron transfer from ubiquinol to cytochrome c. Contributes to the generation of a proton gradient across the mitochondrial membrane that is then used for ATP synthesis. The polypeptide is Cytochrome b (MT-CYB) (Grus nigricollis (Black-necked crane)).